The sequence spans 698 residues: UvrABC system protein B (698 aa).

The region spanning 25 to 183 (NGLNSGLVHQ…TLIDLQFERN (159 aa)) is the Helicase ATP-binding domain. 38–45 (GATGTGKT) provides a ligand contact to ATP. The Beta-hairpin motif lies at 91–114 (YYDAYTPEAYVPSKDLYIEKEAQI). The Helicase C-terminal domain maps to 428-594 (QIDDLLGEIK…GIVKAVRDLT (167 aa)). The 36-residue stretch at 622 to 657 (FKVINALEKQMKQAAKDLEFEKAALLRDQLTEMRQT) folds into the UVR domain.

Belongs to the UvrB family. In terms of assembly, forms a heterotetramer with UvrA during the search for lesions. Interacts with UvrC in an incision complex.

It is found in the cytoplasm. The UvrABC repair system catalyzes the recognition and processing of DNA lesions. A damage recognition complex composed of 2 UvrA and 2 UvrB subunits scans DNA for abnormalities. Upon binding of the UvrA(2)B(2) complex to a putative damaged site, the DNA wraps around one UvrB monomer. DNA wrap is dependent on ATP binding by UvrB and probably causes local melting of the DNA helix, facilitating insertion of UvrB beta-hairpin between the DNA strands. Then UvrB probes one DNA strand for the presence of a lesion. If a lesion is found the UvrA subunits dissociate and the UvrB-DNA preincision complex is formed. This complex is subsequently bound by UvrC and the second UvrB is released. If no lesion is found, the DNA wraps around the other UvrB subunit that will check the other stand for damage. This chain is UvrABC system protein B, found in Herpetosiphon aurantiacus (strain ATCC 23779 / DSM 785 / 114-95).